A 336-amino-acid polypeptide reads, in one-letter code: Protein RecA (336 aa).

An ATP-binding site is contributed by 66 to 73 (GNESSGKT).

It belongs to the RecA family.

It localises to the cytoplasm. Functionally, can catalyze the hydrolysis of ATP in the presence of single-stranded DNA, the ATP-dependent uptake of single-stranded DNA by duplex DNA, and the ATP-dependent hybridization of homologous single-stranded DNAs. It interacts with LexA causing its activation and leading to its autocatalytic cleavage. The chain is Protein RecA from Mycoplasma pneumoniae (strain ATCC 29342 / M129 / Subtype 1) (Mycoplasmoides pneumoniae).